Consider the following 559-residue polypeptide: Germacrene A synthase (559 aa).

Mg(2+) is bound by residues D312, D316, D456, T460, and E464. The DDXXD motif motif lies at 312 to 316; that stretch reads DDTYD.

This sequence belongs to the terpene synthase family. In terms of assembly, monomer. Requires Mg(2+) as cofactor. In terms of tissue distribution, expressed in glandular trichomes of all aerial tissues, with highest levels in tissues accumulating parthenolide (e.g. flowers and, to some extent, leaves).

It carries out the reaction (2E,6E)-farnesyl diphosphate = (+)-(R)-germacrene A + diphosphate. It participates in secondary metabolite biosynthesis; terpenoid biosynthesis. Functionally, sesquiterpene synthase involved in germacrene A biosynthesis. Germacrene A is a precursor of several sesquiterpene lactones. This chain is Germacrene A synthase, found in Tanacetum parthenium (Feverfew).